The chain runs to 154 residues: Deoxyuridine 5'-triphosphate nucleotidohydrolase (154 aa).

Substrate is bound by residues R70–G72, N83, L87–D89, and M97.

Belongs to the dUTPase family. The cofactor is Mg(2+).

It catalyses the reaction dUTP + H2O = dUMP + diphosphate + H(+). Its pathway is pyrimidine metabolism; dUMP biosynthesis; dUMP from dCTP (dUTP route): step 2/2. In terms of biological role, this enzyme is involved in nucleotide metabolism: it produces dUMP, the immediate precursor of thymidine nucleotides and it decreases the intracellular concentration of dUTP so that uracil cannot be incorporated into DNA. The protein is Deoxyuridine 5'-triphosphate nucleotidohydrolase of Buchnera aphidicola subsp. Acyrthosiphon pisum (strain 5A).